The chain runs to 184 residues: Large ribosomal subunit protein bL9 (184 aa).

The segment at 160 to 184 is disordered; the sequence is LQNQKSEQQEAEQDANKEAADGDDS. Over residues 173-184 the composition is skewed to basic and acidic residues; that stretch reads DANKEAADGDDS.

This sequence belongs to the bacterial ribosomal protein bL9 family.

Binds to the 23S rRNA. The sequence is that of Large ribosomal subunit protein bL9 from Wolbachia sp. subsp. Drosophila simulans (strain wRi).